Reading from the N-terminus, the 593-residue chain is Arylsulfatase D (593 aa).

Positions Met1–Pro33 are cleaved as a signal peptide. Positions 49 and 50 each coordinate Ca(2+). The N-linked (GlcNAc...) asparagine glycan is linked to Asn61. Cys89 provides a ligand contact to Ca(2+). The Nucleophile role is filled by Cys89. Cys89 is subject to 3-oxoalanine (Cys). An N-linked (GlcNAc...) asparagine glycan is attached at Asn128. Lys148 is a binding site for substrate. His150 is an active-site residue. His304 contacts substrate. A glycan (N-linked (GlcNAc...) asparagine) is linked at Asn347. Asp356 and His357 together coordinate Ca(2+). Lys381 is a binding site for substrate.

It belongs to the sulfatase family. Requires Ca(2+) as cofactor. Post-translationally, the conversion to 3-oxoalanine (also known as C-formylglycine, FGly), of a serine or cysteine residue in prokaryotes and of a cysteine residue in eukaryotes, is critical for catalytic activity. Expressed in the pancreas, kidney, liver, lung, placenta, brain and heart.

It is found in the lysosome. The polypeptide is Arylsulfatase D (ARSD) (Homo sapiens (Human)).